We begin with the raw amino-acid sequence, 2596 residues long: Cadherin EGF LAG seven-pass G-type receptor fmi-1 (2596 aa).

Positions 1–22 are cleaved as a signal peptide; sequence MMLDRIMFLLFFILSLVIGSFS. At 23–2229 the chain is on the extracellular side; the sequence is EYLDDKYYST…IVRVAQMDNM (2207 aa). 8 consecutive Cadherin domains span residues 166–270, 271–375, 376–479, 480–581, 582–682, 683–784, 785–892, and 893–1000; these read QQEK…SPIF, EKDS…APVF, ASDS…APTL, IAAQ…APTF, DKKE…APYF, NDHP…SPQF, TSSS…APTF, and EQLS…KPAL. N-linked (GlcNAc...) asparagine glycans are attached at residues asparagine 381, asparagine 387, asparagine 562, asparagine 587, asparagine 765, and asparagine 824. Asparagine 1030 and asparagine 1263 each carry an N-linked (GlcNAc...) asparagine glycan. Residues 1251–1287 enclose the EGF-like 1 domain; that stretch reads RIDECYRGRCSNNSTCVAFENTYQCECKPGWIGRHCE. Disulfide bonds link cysteine 1255–cysteine 1266, cysteine 1260–cysteine 1275, cysteine 1277–cysteine 1286, cysteine 1497–cysteine 1526, cysteine 1533–cysteine 1546, cysteine 1540–cysteine 1555, cysteine 1557–cysteine 1567, cysteine 1709–cysteine 1732, cysteine 1738–cysteine 1750, cysteine 1744–cysteine 1759, cysteine 1761–cysteine 1770, and cysteine 1780–cysteine 1785. In terms of domain architecture, Laminin G-like 1 spans 1333 to 1526; that stretch reads SVSFDGEGLL…HKVGQVHEGC (194 aa). One can recognise an EGF-like 2 domain in the interval 1529-1568; the sequence is RKDFCSTSDGQCSATSKCVNRWGGRICSCPQSVHSTGECV. Residues 1577–1732 enclose the Laminin G-like 2 domain; it reads RGHSLFEEES…KKKGKTRAGC (156 aa). EGF-like domains are found at residues 1734–1771 and 1776–1808; these read VPNR…DTCL and VANV…KNCQ. N-linked (GlcNAc...) asparagine glycosylation occurs at asparagine 1789. The cysteines at positions 1798 and 1807 are disulfide-linked. N-linked (GlcNAc...) asparagine glycosylation is found at asparagine 1965, asparagine 1992, asparagine 2152, asparagine 2195, and asparagine 2228. Positions 2054–2219 constitute a GAIN-B domain; it reads EYSTLISKLW…TMFVNDQSSS (166 aa). An intrachain disulfide couples cysteine 2174 to cysteine 2201. Residues 2174 to 2219 form a GPS region; the sequence is CVRFDEKSGTWTARGAALIGLNLTHAACEYNRIGVFTMFVNDQSSS. Residues 2230-2250 form a helical membrane-spanning segment; that stretch reads TSPAIAGVALFLCFLSILLTL. Topologically, residues 2251-2261 are cytoplasmic; the sequence is SRRSLKTHSVR. Residues 2262 to 2282 form a helical membrane-spanning segment; sequence IGFILFFAINILNLFFVHKTA. At 2283–2292 the chain is on the extracellular side; it reads INQAYCPVRN. Residues 2293 to 2313 traverse the membrane as a helical segment; it reads AMLSFTSSAPFAWLFLYGLYI. Residues 2314 to 2326 lie on the Cytoplasmic side of the membrane; sequence YRMLADGSSSPSL. The helical transmembrane segment at 2327–2347 threads the bilayer; sequence TTSLLVGIVFPCLISFTTFFV. The Extracellular segment spans residues 2348 to 2356; sequence TDQCSLSPH. A helical transmembrane segment spans residues 2357-2377; the sequence is LWLFWCIILPIGLFLLLSFYA. The Cytoplasmic portion of the chain corresponds to 2378-2401; the sequence is AATSVLVSLHKKYDVFVAKYNVKR. Residues 2402-2422 form a helical membrane-spanning segment; the sequence is AVFQHFILTIFTLGMTLTGLF. Topologically, residues 2423-2437 are extracellular; it reads ANQLPLPMEIMEISQ. A helical membrane pass occupies residues 2438-2458; it reads SIIYLIAALVIFLWCVCDITT. The Cytoplasmic segment spans residues 2459–2596; sequence KASDSNPSMW…KNTTSTFNRE (138 aa).

It belongs to the G-protein coupled receptor 2 family. LN-TM7 subfamily. As to expression, expressed in a region of neuropil around the nerve ring and the ventral cord (at protein level). Expressed in the head, tail, ventral cord, nerve ring and neurons including HSN neurons. Expressed in DA, VA, and VB and weakly in the DB cholinergic neurons. Not expressed in ventral D-type GABAergic motorneurons.

Its subcellular location is the cell membrane. It is found in the cell projection. The protein localises to the axon. It localises to the dendrite. Its function is as follows. During ventral cord development, required for axon fasciculation and navigation, mediating both pioneer and follower axon extension, guidance and track formation. Acts in CEPsh glia and SubL neurons to guide follower axons into the nerve ring. Promotes motorneuron development by positively regulating the extension of the anterior neurite of ventral D-type GABAergic motorneurons along the anterior-posterior axis of the ventral nerve cord. Plays a role in synaptogenesis by regulating synaptic vesicle accumulation at GABAergic and cholinergic neuromuscular junctions. In Caenorhabditis elegans, this protein is Cadherin EGF LAG seven-pass G-type receptor fmi-1.